A 212-amino-acid polypeptide reads, in one-letter code: Ropporin-1B (212 aa).

Residues 12-49 form the RIIa domain; the sequence is PELPKMLKEFAKAAIRAQPQDLIQWGADYFEALSRGET. Position 56 is a phosphoserine (Ser-56). Positions 209–212 are interaction with RHPN1; sequence VWLE.

Belongs to the ropporin family. As to quaternary structure, homodimer. Interacts with RHPN1. May interact with SPA17. Interacts with AKAP3. Interacts with FSCB; the interaction increases upon spermatozoa capacitation conditions. In terms of processing, sumoylated, sumoylation decreases upon spermatozoa capacitation conditions.

It localises to the cell projection. Its subcellular location is the cilium. The protein resides in the flagellum. Its function is as follows. Important for male fertility. With ROPN1L, involved in fibrous sheath integrity and sperm motility, plays a role in PKA-dependent signaling processes required for spermatozoa capacitation. This chain is Ropporin-1B (ROPN1B), found in Homo sapiens (Human).